Reading from the N-terminus, the 244-residue chain is Acetoacetate decarboxylase (244 aa).

The active-site Schiff-base intermediate with acetoacetate is Lys-115.

It belongs to the ADC family.

It carries out the reaction acetoacetate + H(+) = acetone + CO2. Functionally, catalyzes the conversion of acetoacetate to acetone and carbon dioxide. In Streptomyces nogalater, this protein is Acetoacetate decarboxylase.